The chain runs to 423 residues: Glutamate-1-semialdehyde 2,1-aminomutase (423 aa).

Lys-262 is subject to N6-(pyridoxal phosphate)lysine.

Belongs to the class-III pyridoxal-phosphate-dependent aminotransferase family. HemL subfamily. In terms of assembly, homodimer. Pyridoxal 5'-phosphate serves as cofactor.

The protein resides in the cytoplasm. It catalyses the reaction (S)-4-amino-5-oxopentanoate = 5-aminolevulinate. It functions in the pathway porphyrin-containing compound metabolism; protoporphyrin-IX biosynthesis; 5-aminolevulinate from L-glutamyl-tRNA(Glu): step 2/2. The polypeptide is Glutamate-1-semialdehyde 2,1-aminomutase (Saccharophagus degradans (strain 2-40 / ATCC 43961 / DSM 17024)).